The primary structure comprises 147 residues: Adenylylsulfatase HINT1 (147 aa).

An HIT domain is found at 37–147 (IFDKIISKEI…GGRQMNWPPG (111 aa)). The short motif at 131–135 (HIHVH) is the Histidine triad motif element. Catalysis depends on His-133, which acts as the Tele-AMP-histidine intermediate. His-135 is a binding site for substrate.

The protein localises to the peroxisome. It localises to the plastid. The protein resides in the chloroplast. It catalyses the reaction adenosine 5'-phosphosulfate + H2O = sulfate + AMP + 2 H(+). Its function is as follows. Possesses adenylylsulfatase activity in vitro. This Arabidopsis thaliana (Mouse-ear cress) protein is Adenylylsulfatase HINT1.